Reading from the N-terminus, the 295-residue chain is Small ribosomal subunit protein uS2 (295 aa).

The segment at 263 to 295 (KKFSKTKNIDEETNTEFEKALNDADENKNSDNA) is disordered. A compositionally biased stretch (basic and acidic residues) spans 278–295 (EFEKALNDADENKNSDNA).

The protein belongs to the universal ribosomal protein uS2 family.

This chain is Small ribosomal subunit protein uS2, found in Rickettsia peacockii (strain Rustic).